The primary structure comprises 200 residues: Holliday junction branch migration complex subunit RuvA (200 aa).

The segment at 1–65 is domain I; it reads MYEYIKGTLT…ETEHVLYGFS (65 aa). The segment at 66–144 is domain II; it reads SRAERECFRL…TLMPLYLEEP (79 aa). The tract at residues 145 to 149 is flexible linker; that stretch reads VVPSS. Residues 150 to 200 are domain III; it reads TANSSFKEGIGALMNLGFSRLAADRMMTEAVKELSEEASVAELLPIALRKS.

Belongs to the RuvA family. As to quaternary structure, homotetramer. Forms an RuvA(8)-RuvB(12)-Holliday junction (HJ) complex. HJ DNA is sandwiched between 2 RuvA tetramers; dsDNA enters through RuvA and exits via RuvB. An RuvB hexamer assembles on each DNA strand where it exits the tetramer. Each RuvB hexamer is contacted by two RuvA subunits (via domain III) on 2 adjacent RuvB subunits; this complex drives branch migration. In the full resolvosome a probable DNA-RuvA(4)-RuvB(12)-RuvC(2) complex forms which resolves the HJ.

It localises to the cytoplasm. Its function is as follows. The RuvA-RuvB-RuvC complex processes Holliday junction (HJ) DNA during genetic recombination and DNA repair, while the RuvA-RuvB complex plays an important role in the rescue of blocked DNA replication forks via replication fork reversal (RFR). RuvA specifically binds to HJ cruciform DNA, conferring on it an open structure. The RuvB hexamer acts as an ATP-dependent pump, pulling dsDNA into and through the RuvAB complex. HJ branch migration allows RuvC to scan DNA until it finds its consensus sequence, where it cleaves and resolves the cruciform DNA. This is Holliday junction branch migration complex subunit RuvA from Chlamydia trachomatis serovar L2 (strain ATCC VR-902B / DSM 19102 / 434/Bu).